The chain runs to 154 residues: Protein X (154 aa).

The tract at residues 68 to 117 (PCALRFTFARRMETTVNAHQVLPKVLHKRTLGLSAMSTTDLEAYFKDCVF) is mitochondrial targeting sequence.

It belongs to the orthohepadnavirus protein X family. As to quaternary structure, may form homodimer. May interact with host CEBPA, CFLAR, CREB1, DDB1, E4F1, HBXIP, HSPD1/HSP60, NFKBIA, POLR2E and SMAD4. Interacts with host SMC5-SMC6 complex and induces its degradation. Interacts with host TRPC4AP; leading to prevent ubiquitination of TRPC4AP. Interacts with host PLSCR1; this interaction promotes ubiquitination and degradation of HBx and impairs HBx-mediated cell proliferation. A fraction may be phosphorylated in insect cells and HepG2 cells, a human hepatoblastoma cell line. Phosphorylated in vitro by host protein kinase C or mitogen-activated protein kinase. N-acetylated in insect cells.

It is found in the host cytoplasm. Its subcellular location is the host nucleus. The protein resides in the host mitochondrion. Its function is as follows. Multifunctional protein that plays a role in silencing host antiviral defenses and promoting viral transcription. Does not seem to be essential for HBV infection. May be directly involved in development of cirrhosis and liver cancer (hepatocellular carcinoma). Most of cytosolic activities involve modulation of cytosolic calcium. The effect on apoptosis is controversial depending on the cell types in which the studies have been conducted. May induce apoptosis by localizing in mitochondria and causing loss of mitochondrial membrane potential. May also modulate apoptosis by binding host CFLAR, a key regulator of the death-inducing signaling complex (DISC). Promotes viral transcription by using the host E3 ubiquitin ligase DDB1 to target the SMC5-SMC6 complex to proteasomal degradation. This host complex would otherwise bind to viral episomal DNA, and prevents its transcription. Moderately stimulates transcription of many different viral and cellular transcription elements. Promoters and enhancers stimulated by HBx contain DNA binding sites for NF-kappa-B, AP-1, AP-2, c-EBP, ATF/CREB, or the calcium-activated factor NF-AT. This chain is Protein X, found in Hepatitis B virus genotype C subtype ayw (isolate China/Tibet127/2002) (HBV-C).